Consider the following 183-residue polypeptide: Ribosome-recycling factor (183 aa).

This sequence belongs to the RRF family.

Its subcellular location is the cytoplasm. Its function is as follows. Responsible for the release of ribosomes from messenger RNA at the termination of protein biosynthesis. May increase the efficiency of translation by recycling ribosomes from one round of translation to another. The protein is Ribosome-recycling factor of Deinococcus deserti (strain DSM 17065 / CIP 109153 / LMG 22923 / VCD115).